Consider the following 653-residue polypeptide: Intermembrane lipid transfer protein vps13l (653 aa).

Residues 5-49 (ISELKCQQHDKLVTIYCCACDAYFCKKCDKEKHSQDDNQEDSLHI) form a B box-type zinc finger. Residues C10, H13, C32, and H37 each coordinate Zn(2+). 3 disordered regions span residues 159 to 232 (NLID…NRKK), 248 to 420 (HILN…EDDS), and 627 to 653 (EKSN…PNEN). Positions 195–213 (SPSPSRSSESNSTTNNNNN) are enriched in low complexity. Positions 266-277 (DYDDDDDNDDDN) are enriched in acidic residues. Over residues 278 to 293 (NNNNNNNNNNNNNNNN) the composition is skewed to low complexity. Over residues 314 to 330 (ETEKEIENVENKIDNKP) the composition is skewed to basic and acidic residues. Residues 366-381 (IFEEEEEEEEDEDEVG) show a composition bias toward acidic residues.

This sequence belongs to the VPS13 family.

It localises to the membrane. In terms of biological role, mediates the transfer of lipids between membranes at organelle contact sites. The polypeptide is Intermembrane lipid transfer protein vps13l (vps13l) (Dictyostelium discoideum (Social amoeba)).